The sequence spans 185 residues: 16S rRNA aminocarboxypropyltransferase (185 aa).

Positions 19, 69, 93, 108, and 112 each coordinate S-adenosyl-L-methionine.

It belongs to the TDD superfamily. TSR3 family.

The protein resides in the cytoplasm. It carries out the reaction an N(1)-methylpseudouridine in rRNA + S-adenosyl-L-methionine = N(1)-methyl-N(3)-[(3S)-3-amino-3-carboxypropyl]pseudouridine in rRNA + S-methyl-5'-thioadenosine + H(+). Functionally, aminocarboxypropyltransferase that catalyzes the aminocarboxypropyl transfer on pseudouridine corresponding to position 914 in M.jannaschii 16S rRNA. It constitutes the last step in biosynthesis of the hypermodified N1-methyl-N3-(3-amino-3-carboxypropyl) pseudouridine (m1acp3-Psi). The sequence is that of 16S rRNA aminocarboxypropyltransferase from Vulcanisaeta distributa (strain DSM 14429 / JCM 11212 / NBRC 100878 / IC-017).